Reading from the N-terminus, the 458-residue chain is tRNA modification GTPase MnmE (458 aa).

Arg-26, Glu-88, and Arg-127 together coordinate (6S)-5-formyl-5,6,7,8-tetrahydrofolate. Residues 224-378 (GLSTAIIGRP…IEERINDIFF (155 aa)) form the TrmE-type G domain. Asn-234 is a binding site for K(+). GTP-binding positions include 234-239 (NVGKSS), 253-259 (TDIEGTT), and 278-281 (DTAG). A Mg(2+)-binding site is contributed by Ser-238. K(+) is bound by residues Thr-253, Ile-255, and Thr-258. Position 259 (Thr-259) interacts with Mg(2+). Lys-458 contacts (6S)-5-formyl-5,6,7,8-tetrahydrofolate.

This sequence belongs to the TRAFAC class TrmE-Era-EngA-EngB-Septin-like GTPase superfamily. TrmE GTPase family. In terms of assembly, homodimer. Heterotetramer of two MnmE and two MnmG subunits. K(+) serves as cofactor.

It is found in the cytoplasm. Its function is as follows. Exhibits a very high intrinsic GTPase hydrolysis rate. Involved in the addition of a carboxymethylaminomethyl (cmnm) group at the wobble position (U34) of certain tRNAs, forming tRNA-cmnm(5)s(2)U34. In Streptococcus agalactiae serotype Ia (strain ATCC 27591 / A909 / CDC SS700), this protein is tRNA modification GTPase MnmE.